A 121-amino-acid chain; its full sequence is MALNIENIIAEIKEATILELNDLVKAIEEEFGVTAAAPVAAAAASGEAAAAKDSFDVELTAAGDKKVGVIKVVREITGEGLKEAKAIVDNAPSVIKEGASEAEANEIKEKLEAAGASVTLK.

Belongs to the bacterial ribosomal protein bL12 family. As to quaternary structure, homodimer. Part of the ribosomal stalk of the 50S ribosomal subunit. Forms a multimeric L10(L12)X complex, where L10 forms an elongated spine to which 2 to 4 L12 dimers bind in a sequential fashion. Binds GTP-bound translation factors.

Its function is as follows. Forms part of the ribosomal stalk which helps the ribosome interact with GTP-bound translation factors. Is thus essential for accurate translation. In Streptococcus agalactiae serotype Ia (strain ATCC 27591 / A909 / CDC SS700), this protein is Large ribosomal subunit protein bL12.